Reading from the N-terminus, the 91-residue chain is Acylphosphatase (91 aa).

The Acylphosphatase-like domain maps to 4–91 (RAIVTIKGLV…GEFDDFDVRY (88 aa)). Active-site residues include Arg-19 and Asn-37.

The protein belongs to the acylphosphatase family.

The enzyme catalyses an acyl phosphate + H2O = a carboxylate + phosphate + H(+). The protein is Acylphosphatase (acyP) of Geobacter sulfurreducens (strain ATCC 51573 / DSM 12127 / PCA).